Consider the following 326-residue polypeptide: Organic solute transporter subunit alpha (326 aa).

The Extracellular segment spans residues methionine 1–aspartate 28. The N-linked (GlcNAc...) asparagine glycan is linked to asparagine 5. The chain crosses the membrane as a helical span at residues isoleucine 29–phenylalanine 49. Over isoleucine 50–threonine 67 the chain is Cytoplasmic. Residues isoleucine 68–valine 88 traverse the membrane as a helical segment. Residues proline 89 to serine 99 are Extracellular-facing. Residues alanine 100 to glycine 120 form a helical membrane-spanning segment. Residues aspartate 121 to lysine 161 lie on the Cytoplasmic side of the membrane. Residues leucine 162–tryptophan 182 form a helical membrane-spanning segment. Residues threonine 183 to alanine 198 are Extracellular-facing. Residues asparagine 184 and asparagine 191 are each glycosylated (N-linked (GlcNAc...) asparagine). Residues isoleucine 199 to methionine 219 traverse the membrane as a helical segment. Residues phenylalanine 220–alanine 237 are Cytoplasmic-facing. The chain crosses the membrane as a helical span at residues methionine 238 to leucine 258. Residue asparagine 259 is glycosylated (N-linked (GlcNAc...) asparagine). Over asparagine 259–tyrosine 275 the chain is Extracellular. A helical transmembrane segment spans residues methionine 276 to leucine 296. Residues tyrosine 297 to alanine 326 lie on the Cytoplasmic side of the membrane.

The protein belongs to the OST-alpha family. As to quaternary structure, interacts with slc51b. The Ost-alpha/Ost-beta complex is a heterodimer composed of alpha (slc51a) and beta (slc51b) subunit.

The protein localises to the cell membrane. Its subcellular location is the endoplasmic reticulum membrane. It catalyses the reaction taurocholate(out) = taurocholate(in). It carries out the reaction prostaglandin E2(out) = prostaglandin E2(in). The catalysed reaction is estrone 3-sulfate(out) = estrone 3-sulfate(in). The enzyme catalyses dehydroepiandrosterone 3-sulfate(out) = dehydroepiandrosterone 3-sulfate(in). It catalyses the reaction tauroursodeoxycholate(out) = tauroursodeoxycholate(in). It carries out the reaction glycoursodeoxycholate(out) = glycoursodeoxycholate(in). The catalysed reaction is glycocholate(out) = glycocholate(in). The enzyme catalyses taurochenodeoxycholate(out) = taurochenodeoxycholate(in). It catalyses the reaction glycochenodeoxycholate(out) = glycochenodeoxycholate(in). It carries out the reaction taurodeoxycholate(out) = taurodeoxycholate(in). The catalysed reaction is glycodeoxycholate(out) = glycodeoxycholate(in). In terms of biological role, essential component of the Ost-alpha/Ost-beta complex, a heterodimer that acts as the intestinal basolateral transporter responsible for the translocation of bile acids (such as taurocholate), steroids (such as estrone sulfate), and eicosanoids (such as prostaglandin E2). This chain is Organic solute transporter subunit alpha (slc51a), found in Danio rerio (Zebrafish).